Consider the following 199-residue polypeptide: MPNYKLLYFNMRGRAEIIRYIFAYLDIKYEDHRIEQADWPKIKPTLPFGKIPVLEVEGLTLHQSLAIARYLTKNTDLAGKTELEQCQVDAVVDTLDDFMSLFPWAEENQDLKERTFNDLLTRQAPHLLKDLDTYLGDKEWFIGNYVTWADFYWDICSTTLLVLKPDLLGIYPRLVSLRNKVQAIPAISAWILKRPQTKL.

The region spanning 2-79 (PNYKLLYFNM…YLTKNTDLAG (78 aa)) is the GST N-terminal domain. Glutathione-binding positions include Tyr-8, Arg-14, Trp-39, 49 to 51 (GKI), and 63 to 64 (QS). The region spanning 81 to 199 (TELEQCQVDA…WILKRPQTKL (119 aa)) is the GST C-terminal domain.

It belongs to the GST superfamily. Sigma family. Homodimer. It depends on glutathione as a cofactor. Highly expressed in spleen and bone marrow. Lower levels of expression in small intestine, colon, liver, pancreas and skin. Not detected in brain, heart, lung or kidney (at protein level).

It is found in the cytoplasm. The enzyme catalyses prostaglandin H2 = prostaglandin D2. It catalyses the reaction RX + glutathione = an S-substituted glutathione + a halide anion + H(+). The catalysed reaction is 2-glyceryl-prostaglandin H2 = 2-glyceryl-prostaglandin D2. In terms of biological role, bifunctional enzyme which catalyzes both the conversion of PGH2 to PGD2, a prostaglandin involved in smooth muscle contraction/relaxation and a potent inhibitor of platelet aggregation, and the conjugation of glutathione with a wide range of aryl halides and organic isothiocyanates. Also exhibits low glutathione-peroxidase activity towards cumene hydroperoxide. The chain is Hematopoietic prostaglandin D synthase from Rattus norvegicus (Rat).